Here is a 368-residue protein sequence, read N- to C-terminus: MIKKTILNDTHRALGAKMVDFSGWEMPIHYGSQIDEHHHVRRNAGIFDVSHMTVIDLHGTQVRPLLRRLLANSVDKLKVPGKALYSCMLNPQGGVIDDLIVYYLREDYFRFIVNAATREKDLAWINTQASAFNVRVEERADLAMLAVQGPAARAQVTNLLAETHRDAVEKLGRFAALEVASHSKKILFISRTGYTGEDGFEILLPQEETITLWNALLKTGVKPIGLGARDTLRLEAGMNLYGQDMDEQVSPYEAALGWTVMLDEGRNFIGRNVLEQQKTNGVSRQMIGLLMDEKGVLRHGQKVLTAQGEGHILSGTFSPTLNKAIGFARVPAGKPSEVRVNIRDREIPVRVVRFPFVREGQTQPNIFD.

It belongs to the GcvT family. In terms of assembly, the glycine cleavage system is composed of four proteins: P, T, L and H.

It catalyses the reaction N(6)-[(R)-S(8)-aminomethyldihydrolipoyl]-L-lysyl-[protein] + (6S)-5,6,7,8-tetrahydrofolate = N(6)-[(R)-dihydrolipoyl]-L-lysyl-[protein] + (6R)-5,10-methylene-5,6,7,8-tetrahydrofolate + NH4(+). In terms of biological role, the glycine cleavage system catalyzes the degradation of glycine. The chain is Aminomethyltransferase from Xylella fastidiosa (strain 9a5c).